The chain runs to 445 residues: FAS-associated factor 2-A (445 aa).

Residues Glu-12–Glu-53 enclose the UBA domain. Positions Ser-275–Glu-353 form a coiled coil. The tract at residues Arg-302–Pro-354 is disordered. Residues Ala-303–Glu-348 are compositionally biased toward basic and acidic residues. Residues Asp-357–Val-439 form the UBX domain.

Its subcellular location is the cytoplasm. The protein localises to the lipid droplet. It is found in the endoplasmic reticulum. In terms of biological role, plays an important role in endoplasmic reticulum-associated degradation (ERAD) that mediates ubiquitin-dependent degradation of misfolded endoplasmic reticulum proteins. Involved in inhibition of lipid droplet degradation. Involved in stress granule disassembly. This is FAS-associated factor 2-A (faf2-a) from Xenopus laevis (African clawed frog).